The sequence spans 273 residues: Undecaprenyl-diphosphatase (273 aa).

7 helical membrane-spanning segments follow: residues 4–24 (FLLL…FLPI), 43–63 (KGKV…CWEY), 83–103 (FVLN…LFIK), 109–129 (LFHP…ILWA), 184–204 (ATEF…FYDL), 218–238 (VFAI…RGLL), and 248–268 (VFAW…YSGM).

This sequence belongs to the UppP family.

The protein resides in the cell inner membrane. It catalyses the reaction di-trans,octa-cis-undecaprenyl diphosphate + H2O = di-trans,octa-cis-undecaprenyl phosphate + phosphate + H(+). Catalyzes the dephosphorylation of undecaprenyl diphosphate (UPP). Confers resistance to bacitracin. This Nitrosospira multiformis (strain ATCC 25196 / NCIMB 11849 / C 71) protein is Undecaprenyl-diphosphatase.